The chain runs to 510 residues: Light-independent protochlorophyllide reductase subunit B (510 aa).

D36 contributes to the [4Fe-4S] cluster binding site. D297 (proton donor) is an active-site residue. A substrate-binding site is contributed by 432 to 433 (GM).

Belongs to the ChlB/BchB/BchZ family. Protochlorophyllide reductase is composed of three subunits; ChlL, ChlN and ChlB. Forms a heterotetramer of two ChlB and two ChlN subunits. [4Fe-4S] cluster serves as cofactor.

It is found in the plastid. The protein localises to the chloroplast. The catalysed reaction is chlorophyllide a + oxidized 2[4Fe-4S]-[ferredoxin] + 2 ADP + 2 phosphate = protochlorophyllide a + reduced 2[4Fe-4S]-[ferredoxin] + 2 ATP + 2 H2O. It functions in the pathway porphyrin-containing compound metabolism; chlorophyll biosynthesis (light-independent). In terms of biological role, component of the dark-operative protochlorophyllide reductase (DPOR) that uses Mg-ATP and reduced ferredoxin to reduce ring D of protochlorophyllide (Pchlide) to form chlorophyllide a (Chlide). This reaction is light-independent. The NB-protein (ChlN-ChlB) is the catalytic component of the complex. This Pinus thunbergii (Japanese black pine) protein is Light-independent protochlorophyllide reductase subunit B.